Consider the following 318-residue polypeptide: Nodulation protein D 2 (318 aa).

Positions 6 to 63 constitute an HTH lysR-type domain; it reads LDLNLLVALDALTTERNLTAAARSINLSQPAMSAAIGRLRDYFRDELFTMNGRELRLT. A DNA-binding region (H-T-H motif) is located at residues 23–42; that stretch reads LTAAARSINLSQPAMSAAIG.

The protein belongs to the LysR transcriptional regulatory family.

In terms of biological role, nodD regulates the expression of the nodABCFE genes which encode other nodulation proteins. NodD is also a negative regulator of its own expression. Binds flavonoids as inducers. This chain is Nodulation protein D 2 (nodD2), found in Rhizobium leguminosarum bv. phaseoli.